The chain runs to 196 residues: Neurensin-1 (196 aa).

The next 2 helical transmembrane spans lie at 67 to 87 and 121 to 141; these read LISGTVFVILGLTVLAVGFLV and AVLFCIGGTSMAGCLLMSVFA.

This sequence belongs to the VMP family. As to expression, expressed predominantly in brain. Also weakly expressed in lung and spleen. In brain, expressed strongly in nerve fibers of the cerebral cortex, anterior cerebral nuclei, hypothalamus, amygdaloid complex, brain stem of the metaencephalon and medulla oblongata, and moderately expressed in soma of neurons of the dentate gyrus of the hippocampus and Purkinje cells of the cerebellum.

It is found in the membrane. Its subcellular location is the cell projection. It localises to the neuron projection. Its function is as follows. May play an important role in neural organelle transport, and in transduction of nerve signals or in nerve growth. May play a role in neurite extension. The polypeptide is Neurensin-1 (Mus musculus (Mouse)).